Consider the following 340-residue polypeptide: tRNA N6-adenosine threonylcarbamoyltransferase (340 aa).

Positions 111 and 115 each coordinate Fe cation. Substrate-binding positions include 133 to 137 (VVSGG), aspartate 166, glycine 179, aspartate 183, and asparagine 274. A Fe cation-binding site is contributed by aspartate 299.

The protein belongs to the KAE1 / TsaD family. Requires Fe(2+) as cofactor.

The protein localises to the cytoplasm. It carries out the reaction L-threonylcarbamoyladenylate + adenosine(37) in tRNA = N(6)-L-threonylcarbamoyladenosine(37) in tRNA + AMP + H(+). Functionally, required for the formation of a threonylcarbamoyl group on adenosine at position 37 (t(6)A37) in tRNAs that read codons beginning with adenine. Is involved in the transfer of the threonylcarbamoyl moiety of threonylcarbamoyl-AMP (TC-AMP) to the N6 group of A37, together with TsaE and TsaB. TsaD likely plays a direct catalytic role in this reaction. The chain is tRNA N6-adenosine threonylcarbamoyltransferase from Brachyspira hyodysenteriae (strain ATCC 49526 / WA1).